We begin with the raw amino-acid sequence, 369 residues long: Transforming protein Maf (369 aa).

Disordered stretches follow at residues 57–85 (STPM…TDQK) and 169–243 (GGAP…GLHF). Basic residues predominate over residues 173–183 (HYHHHHHHPHH). Residues 184 to 193 (GGGGGGGGHP) are compositionally biased toward gly residues. Residues 194–211 (HGAAPGSAPPSSASSSAA) show a composition bias toward low complexity. Over residues 212–226 (GSGGGGGGGGGGAGG) the composition is skewed to gly residues. The tract at residues 274–299 (RLKQKRRTLKNRGYAQSCRFKRVQQR) is basic motif. Residues 274–337 (RLKQKRRTLK…DAYKEKYEKL (64 aa)) enclose the bZIP domain. Residues 302–323 (LESEKNQLLQQVEHLKQEISRL) form a leucine-zipper region. The disordered stretch occupies residues 341-369 (GFRENGSSSDNPSSPEFFMYPRESSTTVM). A compositionally biased stretch (polar residues) spans 345-354 (NGSSSDNPSS).

It belongs to the bZIP family. Maf subfamily.

Its subcellular location is the host nucleus. In terms of biological role, might be a transcriptional trans-activator. This Galliformes protein is Transforming protein Maf (V-MAF).